The following is a 428-amino-acid chain: Sulfhydrogenase 1 subunit alpha (428 aa).

Ni(2+) contacts are provided by C65, C68, C418, and C421. Fe cation is bound at residue C68. Residue C421 participates in Fe cation binding.

This sequence belongs to the [NiFe]/[NiFeSe] hydrogenase large subunit family. As to quaternary structure, heterotetramer of alpha, beta, gamma and delta subunits. The nickel-containing alpha and delta subunits constitute the hydrogenase activity. The beta and gamma subunits (flavin-containing dimer) constitute the sulfur reductase activity. It depends on Ni(2+) as a cofactor. Fe cation is required as a cofactor.

It is found in the cytoplasm. The enzyme catalyses H2 + NADP(+) = NADPH + H(+). Functionally, part of a bifunctional enzyme complex that functions as an NADPH-dependent hydrogen-evolving hydrogenase with sulfur-reducing activity. May play a role in hydrogen cycling during fermentative growth. Activity not exhibited with NAD. The alpha and delta subunits form the hydrogenase component that catalyzes the reduction of protons to evolve hydrogen. This is Sulfhydrogenase 1 subunit alpha from Pyrococcus furiosus (strain ATCC 43587 / DSM 3638 / JCM 8422 / Vc1).